The following is a 214-amino-acid chain: Large ribosomal subunit protein uL16-like (214 aa).

Belongs to the universal ribosomal protein uL16 family. Component of the 60S large ribosomal subunit (LSU).

The protein localises to the cytoplasm. In terms of biological role, testis-specific component of the ribosome, which is required for the transition from prophase to metaphase in male meiosis I. Compensates for the inactivated X-linked RPL10 paralog during spermatogenesis. The ribosome is a large ribonucleoprotein complex responsible for the synthesis of proteins in the cell. The small ribosomal subunit (SSU) binds messenger RNAs (mRNAs) and translates the encoded message by selecting cognate aminoacyl-transfer RNA (tRNA) molecules. The large subunit (LSU) contains the ribosomal catalytic site termed the peptidyl transferase center (PTC), which catalyzes the formation of peptide bonds, thereby polymerizing the amino acids delivered by tRNAs into a polypeptide chain. The nascent polypeptides leave the ribosome through a tunnel in the LSU and interact with protein factors that function in enzymatic processing, targeting, and the membrane insertion of nascent chains at the exit of the ribosomal tunnel. In Bos taurus (Bovine), this protein is Large ribosomal subunit protein uL16-like (RPL10L).